We begin with the raw amino-acid sequence, 266 residues long: Dihydropteroate synthase (266 aa).

The region spanning 12-260 (AAIMGILNVT…DVKANQEIVA (249 aa)) is the Pterin-binding domain. N19 serves as a coordination point for Mg(2+). Residues T59, D93, N112, D176, K212, and 248-250 (RVH) contribute to the (7,8-dihydropterin-6-yl)methyl diphosphate site.

The protein belongs to the DHPS family. As to quaternary structure, homodimer or homotrimer. Mg(2+) is required as a cofactor.

The enzyme catalyses (7,8-dihydropterin-6-yl)methyl diphosphate + 4-aminobenzoate = 7,8-dihydropteroate + diphosphate. It functions in the pathway cofactor biosynthesis; tetrahydrofolate biosynthesis; 7,8-dihydrofolate from 2-amino-4-hydroxy-6-hydroxymethyl-7,8-dihydropteridine diphosphate and 4-aminobenzoate: step 1/2. Catalyzes the condensation of para-aminobenzoate (pABA) with 6-hydroxymethyl-7,8-dihydropterin diphosphate (DHPt-PP) to form 7,8-dihydropteroate (H2Pte), the immediate precursor of folate derivatives. The protein is Dihydropteroate synthase (folP) of Streptococcus pyogenes.